Reading from the N-terminus, the 210-residue chain is Orotate phosphoribosyltransferase (210 aa).

5-phospho-alpha-D-ribose 1-diphosphate-binding positions include Arg96, Lys100, His102, and 122 to 130 (EDLISTGGS). Ser126 contacts orotate.

This sequence belongs to the purine/pyrimidine phosphoribosyltransferase family. PyrE subfamily. As to quaternary structure, homodimer. The cofactor is Mg(2+).

The enzyme catalyses orotidine 5'-phosphate + diphosphate = orotate + 5-phospho-alpha-D-ribose 1-diphosphate. It participates in pyrimidine metabolism; UMP biosynthesis via de novo pathway; UMP from orotate: step 1/2. Functionally, catalyzes the transfer of a ribosyl phosphate group from 5-phosphoribose 1-diphosphate to orotate, leading to the formation of orotidine monophosphate (OMP). The chain is Orotate phosphoribosyltransferase from Streptococcus pneumoniae (strain ATCC BAA-255 / R6).